A 395-amino-acid chain; its full sequence is MLRWITAGESHGPALVAMLEGMVAGVEVTSEDISTQLARRRLGYGRGARMKFEADKVTIVGGVRHGRTLGGPIAVEVGNTEWPKWETIMSADPVDAELLADQARNAPLTRPRPGHADYSGMLKYGFDDARPVLERASARETAARVAAATFARSFLRQVFGVEVLSHVISIGASDPYVGPEPTASDLAAIDASPVRAFDKAAEESMIAEIEAAKRDGDTLGGVVEVVIHGLPVGLGSFISGADRLDARLASALMGIQAIKGVEVGDGFETARRRGSQAHDEMRPGPDGILRSTNRAGGLEGGMTNGEALRVRAAMKPISTVPRALATVDMSTGEEAVAIHQRSDVCAVPAAGVVAEAMVALVVAQAALEKFGGDSVAETTANYERYASGVAARLAR.

Residues Arg40 and Arg46 each contribute to the NADP(+) site. Residues 135–137 and 256–257 contribute to the FMN site; these read RAS and QA. The span at 272-283 shows a compositional bias: basic and acidic residues; that stretch reads RRGSQAHDEMRP. A disordered region spans residues 272 to 296; sequence RRGSQAHDEMRPGPDGILRSTNRAG. FMN contacts are provided by residues Gly300, 315–319, and Arg341; that span reads KPIST.

It belongs to the chorismate synthase family. In terms of assembly, homotetramer. It depends on FMNH2 as a cofactor.

It catalyses the reaction 5-O-(1-carboxyvinyl)-3-phosphoshikimate = chorismate + phosphate. The protein operates within metabolic intermediate biosynthesis; chorismate biosynthesis; chorismate from D-erythrose 4-phosphate and phosphoenolpyruvate: step 7/7. Catalyzes the anti-1,4-elimination of the C-3 phosphate and the C-6 proR hydrogen from 5-enolpyruvylshikimate-3-phosphate (EPSP) to yield chorismate, which is the branch point compound that serves as the starting substrate for the three terminal pathways of aromatic amino acid biosynthesis. This reaction introduces a second double bond into the aromatic ring system. The protein is Chorismate synthase of Rhodococcus jostii (strain RHA1).